Here is a 172-residue protein sequence, read N- to C-terminus: Bone marrow stromal antigen 2 (172 aa).

At 1-30 (MAPSFYHYLPVPMDEMGGKQGWGSHRQWLG) the chain is on the cytoplasmic side. Residues 31 to 51 (AAILVVLFGVTLVILTIYFAV) form a helical; Signal-anchor for type II membrane protein membrane-spanning segment. Over 52–152 (TANSVACRDG…ETSSTVQVNS (101 aa)) the chain is Extracellular. Asn70 is a glycosylation site (N-linked (GlcNAc...) asparagine). Positions 74–147 (LLQRQLTRTQ…LRIQKETSST (74 aa)) form a coiled coil. Asn94 carries N-linked (GlcNAc...) asparagine; atypical glycosylation. N-linked (GlcNAc...) asparagine glycosylation occurs at Asn97. Ser152 carries GPI-anchor amidated serine lipidation. A propeptide spans 153–172 (GSSMVVSSLLVLKVSLFLLF) (removed in mature form).

As to quaternary structure, parallel homodimer; disulfide-linked. May form homotetramers under reducing conditions. Isoform 1 and isoform 2 form homodimers and also heterodimers with each other. Dimerization is essential for its antiviral activity. Interacts (via cytoplasmic domain) with ARHGAP44. Interacts with MMP14 (via C-terminal cytoplasmic tail). Interacts with LILRA4/ILT7. Interacts with RNF115. In naive mice, specifically expressed on type I interferon-producing cells (at protein level).

It is found in the golgi apparatus. It localises to the trans-Golgi network. The protein localises to the cell membrane. Its subcellular location is the late endosome. The protein resides in the membrane raft. It is found in the cytoplasm. It localises to the apical cell membrane. In terms of biological role, IFN-induced antiviral host restriction factor which efficiently blocks the release of diverse mammalian enveloped viruses by directly tethering nascent virions to the membranes of infected cells. Acts as a direct physical tether, holding virions to the cell membrane and linking virions to each other. The tethered virions can be internalized by endocytosis and subsequently degraded or they can remain on the cell surface. In either case, their spread as cell-free virions is restricted. Its target viruses belong to diverse families, including retroviridae: human immunodeficiency virus type 1 (HIV-1), mouse mammary tumor virus (MMTV) and murine leukemia virus (MLV), filoviridae: ebola virus (EBOV), arenaviridae: lassa virus (LASV), and rhabdoviridae: vesicular stomatitis virus (VSV). Can inhibit cell surface proteolytic activity of MMP14 causing decreased activation of MMP15 which results in inhibition of cell growth and migration. Can stimulate signaling by LILRA4/ILT7 and consequently provide negative feedback to the production of IFN by plasmacytoid dendritic cells in response to viral infection. Plays a role in the organization of the subapical actin cytoskeleton in polarized epithelial cells. The polypeptide is Bone marrow stromal antigen 2 (Bst2) (Mus musculus (Mouse)).